The following is a 313-amino-acid chain: Ribosomal RNA small subunit methyltransferase H (313 aa).

Residues 35-37 (GGH), D55, F79, D101, and Q108 each bind S-adenosyl-L-methionine.

Belongs to the methyltransferase superfamily. RsmH family.

Its subcellular location is the cytoplasm. The enzyme catalyses cytidine(1402) in 16S rRNA + S-adenosyl-L-methionine = N(4)-methylcytidine(1402) in 16S rRNA + S-adenosyl-L-homocysteine + H(+). Specifically methylates the N4 position of cytidine in position 1402 (C1402) of 16S rRNA. This is Ribosomal RNA small subunit methyltransferase H from Musicola paradisiaca (strain Ech703) (Dickeya paradisiaca).